We begin with the raw amino-acid sequence, 372 residues long: DNA replication and repair protein RecF (372 aa).

ATP is bound at residue 30-37; the sequence is GENAQGKT.

It belongs to the RecF family.

It is found in the cytoplasm. Its function is as follows. The RecF protein is involved in DNA metabolism; it is required for DNA replication and normal SOS inducibility. RecF binds preferentially to single-stranded, linear DNA. It also seems to bind ATP. The protein is DNA replication and repair protein RecF of Shouchella clausii (strain KSM-K16) (Alkalihalobacillus clausii).